The chain runs to 198 residues: Nucleoid occlusion factor SlmA (198 aa).

Residues 10–70 (NRREEILQSL…SLIEFIEDSL (61 aa)) enclose the HTH tetR-type domain. The segment at residues 33-52 (TTAKLAASVGVSEAALYRHF) is a DNA-binding region (H-T-H motif). Residues 119-144 (DRLQGRINQLFERIEVQLRQVMREKK) are a coiled coil.

This sequence belongs to the nucleoid occlusion factor SlmA family. In terms of assembly, homodimer. Interacts with FtsZ.

It localises to the cytoplasm. It is found in the nucleoid. Functionally, required for nucleoid occlusion (NO) phenomenon, which prevents Z-ring formation and cell division over the nucleoid. Acts as a DNA-associated cell division inhibitor that binds simultaneously chromosomal DNA and FtsZ, and disrupts the assembly of FtsZ polymers. SlmA-DNA-binding sequences (SBS) are dispersed on non-Ter regions of the chromosome, preventing FtsZ polymerization at these regions. This Klebsiella pneumoniae (strain 342) protein is Nucleoid occlusion factor SlmA.